A 600-amino-acid chain; its full sequence is Alpha pinene synthase, chloroplastic (600 aa).

The interval 1–26 is disordered; the sequence is MSSISMHARPLNISAANNHHPSWDRR. The transit peptide at 1-31 directs the protein to the chloroplast; that stretch reads MSSISMHARPLNISAANNHHPSWDRRVSKPR. 4 residues coordinate Mg(2+): Asp-354, Asp-358, Asp-498, and Glu-506. A DDXXD motif motif is present at residues 354–358; the sequence is DDVYD.

This sequence belongs to the terpene synthase family. Tpsa subfamily. Requires Mg(2+) as cofactor. Mn(2+) is required as a cofactor. In terms of tissue distribution, barely detectable in leaves.

The protein resides in the plastid. It is found in the chloroplast. The enzyme catalyses (2E)-geranyl diphosphate = alpha-pinene + diphosphate. The protein operates within secondary metabolite biosynthesis; terpenoid biosynthesis. In terms of biological role, monoterpene synthase involved in the biosynthesis of volatile compounds widely used in aromatherapy and folk medicine, and present in culinary herbs. Mediates the conversion of (2E)-geranyl diphosphate (GPP) into alpha-pinene and, as minor compounds, into alpha-phellandrene, limonene and alpha-terpinolene. The chain is Alpha pinene synthase, chloroplastic from Lavandula stoechas (Butterfly lavender).